We begin with the raw amino-acid sequence, 153 residues long: Ribosome-binding factor A (153 aa).

The interval 116 to 153 is disordered; that stretch reads DAQVAEQAQGAQYAAGEDAYRTPSDEDDAEGPESAPRV. The segment covering 119 to 132 has biased composition (low complexity); the sequence is VAEQAQGAQYAAGE.

The protein belongs to the RbfA family. Monomer. Binds 30S ribosomal subunits, but not 50S ribosomal subunits or 70S ribosomes.

It localises to the cytoplasm. One of several proteins that assist in the late maturation steps of the functional core of the 30S ribosomal subunit. Associates with free 30S ribosomal subunits (but not with 30S subunits that are part of 70S ribosomes or polysomes). Required for efficient processing of 16S rRNA. May interact with the 5'-terminal helix region of 16S rRNA. The protein is Ribosome-binding factor A of Kocuria rhizophila (strain ATCC 9341 / DSM 348 / NBRC 103217 / DC2201).